The following is a 718-amino-acid chain: Acetolactate synthase, mitochondrial (718 aa).

2 disordered regions span residues 1–50 and 72–101; these read MLTR…APVY and RKIQSSASTAAASPAVRPQPAQHFQAAPQP. Residues 32–45 are compositionally biased toward polar residues; the sequence is RYSNNIHTSSTQNA. Low complexity predominate over residues 76 to 99; the sequence is SSASTAAASPAVRPQPAQHFQAAP. Glutamate 173 is a binding site for thiamine diphosphate. Arginine 275 contributes to the FAD binding site. Residues 296–327 form a disordered region; that stretch reads IPAKSAQPGHSPYLPSNPLNPSSQPSDPLPGD. A compositionally biased stretch (low complexity) spans 306–325; that stretch reads SPYLPSNPLNPSSQPSDPLP. FAD contacts are provided by residues 397-418 and 449-468; these read HGSAYANFAMQEADVLIALGVR and EIQPKNINKIVEAQIPVLGD. Positions 541–621 are thiamine pyrophosphate binding; that stretch reads QHQMWACQYY…VKVLLFNNEF (81 aa). Mg(2+) is bound by residues aspartate 592 and asparagine 619.

This sequence belongs to the TPP enzyme family. It depends on Mg(2+) as a cofactor. Thiamine diphosphate is required as a cofactor.

The protein resides in the mitochondrion. The catalysed reaction is 2 pyruvate + H(+) = (2S)-2-acetolactate + CO2. It functions in the pathway amino-acid biosynthesis; L-isoleucine biosynthesis; L-isoleucine from 2-oxobutanoate: step 1/4. The protein operates within amino-acid biosynthesis; L-valine biosynthesis; L-valine from pyruvate: step 1/4. The protein is Acetolactate synthase, mitochondrial (ILV2) of Cryptococcus neoformans var. neoformans serotype D (strain JEC21 / ATCC MYA-565) (Filobasidiella neoformans).